Reading from the N-terminus, the 277-residue chain is Short chain dehydrogenase penD (277 aa).

NADP(+)-binding residues include isoleucine 28, aspartate 76, and asparagine 105. Catalysis depends on proton donor residues serine 158 and serine 159. NADP(+) contacts are provided by tyrosine 173, lysine 177, and threonine 209. The Proton acceptor role is filled by tyrosine 173. Lysine 177 serves as the catalytic Lowers pKa of active site Tyr.

This sequence belongs to the short-chain dehydrogenases/reductases (SDR) family.

The catalysed reaction is yaequinolone D + NADPH + H(+) = penigequinolone A + NADP(+) + H2O. It carries out the reaction yaequinolone D + NADPH + H(+) = penigequinolone B + NADP(+) + H2O. Its pathway is secondary metabolite biosynthesis. It functions in the pathway alkaloid biosynthesis. The protein operates within mycotoxin biosynthesis. Its function is as follows. Short chain dehydrogenase; part of the gene cluster that mediates the biosynthesis of penigequinolones, potent insecticidal alkaloids that contain a highly modified 10-carbon prenyl group. The first stage is catalyzed by the nonribosomal peptide synthetase penN that condenses anthranilic acid and O-methyl-L-tyrosine to produce 4'-methoxycyclopeptin. 4'-methoxycyclopeptin is then converted to 4'-methoxydehydrocyclopeptin by the ketoglutarate-dependent dioxygenase penM through dehydrogenation to form a double bond between C-alpha and C-beta of the O-methyltyrosine side chain. PenM also converts its first product methoxydehydrocyclopeptin to 4'-methoxycyclopenin. The following conversion of 4'methoxycyclopenin into 4'-methoxyviridicatin is catalyzed by the cyclopenase penL. 4'-methoxyviridicatin is the precursor of quinolone natural products, and is further converted to quinolinone B. The prenyltransferase penI then catalyzes the canonical Friedel-Crafts alkylation of quinolinone B with dimethylallyl cation to yield dimethylallyl quinolone, which is subjected to FAD-dependent dehydrogenation by the FAD-linked oxidoreductase penH to yield conjugated aryl diene. The delta(3') double bond then serves as the site of the second alkylation with DMAPP catalyzed by the prenyltransferase penG to yield a carbenium ion intermediate, which can be attacked by H(2)O to yield a styrenyl quinolone containing a C3'-hydroxyprenyl chain, or undergo cyclization to yield yaequinolones J1 and J2. The conversion of the styrenyl quinolone into the tetrahydrofuran-containing yaequinolone C is performed by the FAD-dependent monooxygenase penE and involves epoxidation of the terminal C7'-C8' olefin, followed by epoxide ring opening initiated by the C3' hydroxyl group. The predicted cysteine hydrolase penJ acts as an epoxide hydrolase that enhances the rate of the 5-exo-tet cyclization step, increasing the yield of yaequinolone C. PenF catalyzes the cationic rearrangement of the epoxide formed by penE (before ring opening to produce yaequinolone C) into yaequinolone D. Finally, the short-chain dehydrogenase/reductase (SDR)-like reductase penD, catalyzes both the dehydration of yaequinolone D and the reduction of the resulting oxonium to yield penigequinolone. In Penicillium thymicola, this protein is Short chain dehydrogenase penD.